Here is a 313-residue protein sequence, read N- to C-terminus: WUSCHEL-related homeobox 5 (313 aa).

Positions 1-32 (METTTTTLGGGGGGRAGGFSDPPSPLSPPLSP) are disordered. The segment covering 8-17 (LGGGGGGRAG) has biased composition (gly residues). Residues 22–31 (PPSPLSPPLS) are compositionally biased toward pro residues. A DNA-binding region (homeobox; WUS-type) is located at residues 40-104 (LANARWTPTK…NHKARQRQKQ (65 aa)). Disordered stretches follow at residues 224 to 247 (AAGR…GRET) and 271 to 313 (CAAV…SGGR). Over residues 271–301 (CAAVSPTTPSASASFSWESESSDSPSSEAPP) the composition is skewed to low complexity.

This sequence belongs to the WUS homeobox family.

It is found in the nucleus. Functionally, transcription factor which may be involved in developmental processes. The polypeptide is WUSCHEL-related homeobox 5 (WOX5) (Oryza sativa subsp. japonica (Rice)).